We begin with the raw amino-acid sequence, 86 residues long: MSQQRGYRKSRRGYVTSNSMDKTIVVKIEDRVKHALYGKVIRKTSKVKAHDQGSIAGVGDLVLISETRPISATKRWRLVQILEKAK.

Belongs to the universal ribosomal protein uS17 family. As to quaternary structure, part of the 30S ribosomal subunit.

One of the primary rRNA binding proteins, it binds specifically to the 5'-end of 16S ribosomal RNA. This Tropheryma whipplei (strain TW08/27) (Whipple's bacillus) protein is Small ribosomal subunit protein uS17.